The primary structure comprises 412 residues: MAAWDLLFRRVHLATFAGDEPYGALRDGALAVRTGRIEWLGAERDLPREARAAQEIDGAGGWLLPGLIDCHTHLVHAGNRAREFELRMQGANYEEIARAGGGIRVTVIATRAADEAALVVASRPRLARLIAEGVTTVEIKSGYGLELSAERRMLRAARALGDTAPVRVTTTFLGAHALPPEYDGRADDYIAEVCDVMLPALYREGLVDAVDAFCERIAFSPAQTEAVFRAARALGLPVRLHAEQLSDSGGAALAARYGALCADHLEHLSEAGAAALAAAGSVAVLLPGAFYFLRETHLPPAARLRALGVPVAIATDCNPGTSPLSSLLLALNMACVLFRLSPAAALAGVTRNAARALGRGDDLGTLEAGKLADLGLWNVDTPAELCYHLGYNPLALRVFGGQISGAGDVAQG.

H71 and H73 together coordinate Fe(3+). Zn(2+) is bound by residues H71 and H73. 4-imidazolone-5-propanoate-binding residues include R80, Y143, and H176. Position 143 (Y143) interacts with N-formimidoyl-L-glutamate. H241 contacts Fe(3+). H241 serves as a coordination point for Zn(2+). Position 244 (Q244) interacts with 4-imidazolone-5-propanoate. Residue D316 coordinates Fe(3+). D316 contributes to the Zn(2+) binding site. N318 and G320 together coordinate N-formimidoyl-L-glutamate. 4-imidazolone-5-propanoate is bound at residue T321.

The protein belongs to the metallo-dependent hydrolases superfamily. HutI family. Zn(2+) serves as cofactor. Fe(3+) is required as a cofactor.

The protein localises to the cytoplasm. It catalyses the reaction 4-imidazolone-5-propanoate + H2O = N-formimidoyl-L-glutamate. It participates in amino-acid degradation; L-histidine degradation into L-glutamate; N-formimidoyl-L-glutamate from L-histidine: step 3/3. Functionally, catalyzes the hydrolytic cleavage of the carbon-nitrogen bond in imidazolone-5-propanoate to yield N-formimidoyl-L-glutamate. It is the third step in the universal histidine degradation pathway. The chain is Imidazolonepropionase from Aromatoleum aromaticum (strain DSM 19018 / LMG 30748 / EbN1) (Azoarcus sp. (strain EbN1)).